Here is a 144-residue protein sequence, read N- to C-terminus: Maximins 1/H1 (144 aa).

Residues 1-18 (MNFKYIVAVSFLLASAYA) form the signal peptide. Residues 19–43 (RSEENDEQSLSQRDVLEEESLREIR) constitute a propeptide that is removed on maturation. Asparagine 70 is subject to Asparagine amide. A propeptide spanning residues 74–123 (TAEEHEVMKRLEAVMRDLDSLDYPEEAAERETRSFNQEEIANLFTKKEKR) is cleaved from the precursor. At leucine 143 the chain carries Leucine amide.

Belongs to the bombinin family. As to expression, expressed by the skin glands.

It is found in the secreted. In terms of biological role, antibacterial peptide with amphipathic alpha-helical structure that has activity against both Gram-positive and Gram-negative bacteria. Also shows antimicrobial activity against the fungus C.albicans, but not against A.flavus nor P.uticale. It has little hemolytic activity. It possess a significant cytotoxicity against tumor cell lines, but does not possess a significant anti-HIV activity. Also shows high spermicidal activity. Its function is as follows. antibacterial peptide with activity against both Gram-positive and Gram-negative bacteria. Also shows antimicrobial activity against the fungus C.albicans. In addition, shows strong hemolytic activity. This chain is Maximins 1/H1, found in Bombina maxima (Giant fire-bellied toad).